A 408-amino-acid chain; its full sequence is NADH-quinone oxidoreductase subunit D (408 aa).

Belongs to the complex I 49 kDa subunit family. As to quaternary structure, NDH-1 is composed of 14 different subunits. Subunits NuoB, C, D, E, F, and G constitute the peripheral sector of the complex.

The protein localises to the cell inner membrane. It carries out the reaction a quinone + NADH + 5 H(+)(in) = a quinol + NAD(+) + 4 H(+)(out). Functionally, NDH-1 shuttles electrons from NADH, via FMN and iron-sulfur (Fe-S) centers, to quinones in the respiratory chain. The immediate electron acceptor for the enzyme in this species is believed to be ubiquinone. Couples the redox reaction to proton translocation (for every two electrons transferred, four hydrogen ions are translocated across the cytoplasmic membrane), and thus conserves the redox energy in a proton gradient. This chain is NADH-quinone oxidoreductase subunit D, found in Campylobacter hominis (strain ATCC BAA-381 / DSM 21671 / CCUG 45161 / LMG 19568 / NCTC 13146 / CH001A).